A 517-amino-acid chain; its full sequence is V-type proton ATPase subunit B (517 aa).

Residue Ser4 is modified to Phosphoserine. Residue Lys14 forms a Glycyl lysine isopeptide (Lys-Gly) (interchain with G-Cter in ubiquitin) linkage. Ser137 carries the post-translational modification Phosphoserine. Arg381 is an ATP binding site. Residues 487-517 are disordered; sequence RARDDADEDEEDPDTRSSGKKKDASQEESLI. The segment covering 500–511 has biased composition (basic and acidic residues); the sequence is DTRSSGKKKDAS. A phosphoserine mark is found at Ser503 and Ser504. Lys508 participates in a covalent cross-link: Glycyl lysine isopeptide (Lys-Gly) (interchain with G-Cter in ubiquitin). Ser511 carries the post-translational modification Phosphoserine; by ATM or ATR. The residue at position 515 (Ser515) is a Phosphoserine.

It belongs to the ATPase alpha/beta chains family. In terms of assembly, V-ATPase is a heteromultimeric enzyme composed of a peripheral catalytic V1 complex (components A to H) attached to an integral membrane V0 proton pore complex (components: a, c, c', c'', d, e, f and VOA1). Interacts with RAV1 and RAV2 components of the RAVE complex, which are essential for the stability and assembly of V-ATPase.

It is found in the vacuole membrane. Functionally, non-catalytic subunit of the V1 complex of vacuolar(H+)-ATPase (V-ATPase), a multisubunit enzyme composed of a peripheral complex (V1) that hydrolyzes ATP and a membrane integral complex (V0) that translocates protons. V-ATPase is responsible for acidifying and maintaining the pH of intracellular compartments. The sequence is that of V-type proton ATPase subunit B (VMA2) from Saccharomyces cerevisiae (strain ATCC 204508 / S288c) (Baker's yeast).